The sequence spans 546 residues: MIEFAVAGANDPIAATVPWLSLSILVPIVGALLVPFIPDSGDGKQIRWYALGVTLITFLITVSAYLNGYDPSLSGLQLSERVSWLPDLGLTWAVGADGLSMPLILLTSFITSLACLAAWPVSFKPRLFYFLLLAMDGGQIAVFAVQDMLLFFLAWELELIPVYLLLAIWGGKKRQYAATKFILYTAGSSLFILLAALAMGFFGGGTPSFEYTALAAKDFGSGFQLLCYAGLLIAFGVKLPIVPLHTWLPDAHGEATAPVHMLLAGILLKMGGYALLRFNCELLPAAHAQFAPLLIVLGVVNIIYAALTSFAQRNLKRKIAYSSISHMGFVLIGVGSFSALGTSGAMLQMISHGLIGASLFFLVGATYDRTHTLQLDEMGGVGQKMRTMFALWTVCALASLALPGMSGFVSELMVFAGFATDEAYTLPFRVVICCLAAVGVILTPIYLLSMLREIFFGKEKQELVSHTNLVDAEPREVYIIGCLLVPIIGIGLYPRLMTDSYSRSIEALVGRDLGAMERITQPTAPLIRGQAPAVPAVLSAPSVPAS.

Helical transmembrane passes span Val-17–Ile-37, Trp-48–Gly-68, Leu-103–Phe-123, Leu-127–Asp-147, Leu-149–Trp-169, Phe-181–Phe-201, Gly-222–Val-242, Thr-256–Leu-276, Phe-290–Phe-310, Met-327–Leu-347, Gln-348–Asp-368, Phe-389–Val-409, Val-430–Met-450, and Val-477–Met-497.

It belongs to the complex I subunit 4 family.

It localises to the cellular thylakoid membrane. The catalysed reaction is a plastoquinone + NADH + (n+1) H(+)(in) = a plastoquinol + NAD(+) + n H(+)(out). It catalyses the reaction a plastoquinone + NADPH + (n+1) H(+)(in) = a plastoquinol + NADP(+) + n H(+)(out). In terms of biological role, NDH-1 shuttles electrons from NAD(P)H, via FMN and iron-sulfur (Fe-S) centers, to quinones in the respiratory chain. The immediate electron acceptor for the enzyme in this species is believed to be plastoquinone. Couples the redox reaction to proton translocation (for every two electrons transferred, four hydrogen ions are translocated across the cytoplasmic membrane), and thus conserves the redox energy in a proton gradient. This is NAD(P)H-quinone oxidoreductase chain 4 from Parasynechococcus marenigrum (strain WH8102).